The chain runs to 194 residues: Coiled-coil domain-containing protein 184 (194 aa).

A coiled-coil region spans residues 39-68; it reads GMKELMEHLKAQLQALFEDVRAMRGALDEQ. Residues 101–176 are disordered; that stretch reads GLGVVGGKGS…LLGGDGPLVE (76 aa). A compositionally biased stretch (acidic residues) spans 135–145; that stretch reads PEDEEEEEEEK.

This chain is Coiled-coil domain-containing protein 184 (CCDC184), found in Homo sapiens (Human).